A 656-amino-acid polypeptide reads, in one-letter code: Acyl-CoA-binding domain-containing protein 6 (656 aa).

One can recognise an ACB domain in the interval 8–102; sequence YPDRFYAAAA…LEEEDPGWYS (95 aa). An acyl-CoA is bound by residues 44–48 and lysine 70; that span reads YGLYQ. The tract at residues 129-148 is disordered; the sequence is ASTNGTSVPEPKTISENGSS. Kelch repeat units follow at residues 194–241, 254–304, 305–354, 356–405, 406–454, and 461–507; these read KMYI…AQVS, KFFS…LVGT, TLVL…CHAD, YLLI…TVGE, NWYI…LVHS, and YLIS…EPEV. The stretch at 527–636 forms a coiled coil; that stretch reads LKKDDANELL…EQAALEAKQR (110 aa). The segment at 627–656 is disordered; sequence EQAALEAKQRQSSSGMWGWLVGTPPDKSES.

It belongs to the ACBP family. As to expression, highly expressed in leaves. Expressed in roots and seeds.

It localises to the peroxisome. In terms of biological role, binds medium- and long-chain acyl-CoA esters with high affinity. Can interact in vitro with linoleoyl-CoA and linolenoyl-CoA. Binds phosphatidic acid (PA) and phosphatidylcholine (PC) in vitro. May play a role in the biosynthesis of phospholipids. May be involved in lipid degradation via peroxisomal beta-oxydation. The chain is Acyl-CoA-binding domain-containing protein 6 from Oryza sativa subsp. japonica (Rice).